The primary structure comprises 218 residues: Elongation factor Ts (218 aa).

The segment at 82-85 is involved in Mg(2+) ion dislocation from EF-Tu; that stretch reads TDFV.

Belongs to the EF-Ts family.

The protein localises to the cytoplasm. Functionally, associates with the EF-Tu.GDP complex and induces the exchange of GDP to GTP. It remains bound to the aminoacyl-tRNA.EF-Tu.GTP complex up to the GTP hydrolysis stage on the ribosome. This chain is Elongation factor Ts, found in Prochlorococcus marinus (strain MIT 9313).